Here is a 122-residue protein sequence, read N- to C-terminus: MICOS complex subunit MIC13 homolog QIL1 (122 aa).

A helical transmembrane segment spans residues 9–25 (GGLVAATVYYTQKVGIW).

Belongs to the MICOS complex subunit Mic13 family. Component of the mitochondrial contact site and cristae organizing system (MICOS) complex.

The protein resides in the mitochondrion inner membrane. Functionally, component of the MICOS complex, a large protein complex of the mitochondrial inner membrane that plays crucial roles in the maintenance of crista junctions, inner membrane architecture, and formation of contact sites to the outer membrane. The chain is MICOS complex subunit MIC13 homolog QIL1 from Drosophila melanogaster (Fruit fly).